The primary structure comprises 134 residues: Replication enhancer protein (134 aa).

It belongs to the geminiviridae replication enhancer protein family. In terms of assembly, homooligomer. Interacts with the replication-associated protein (REP). Interacts with host proliferating cell nuclear antigen (PCNA). Interacts with host retinoblastoma-related protein 1 (RBR1), and may thereby deregulate the host cell cycle. Oligomerization and interaction with PCNA are necessary for optimal replication enhancement.

Its function is as follows. Increases viral DNA accumulation. Enhances infectivity and symptom expression. The protein is Replication enhancer protein of Tomato yellow leaf curl Sardinia virus (TYLCSV).